Here is a 562-residue protein sequence, read N- to C-terminus: Potassium-transporting ATPase potassium-binding subunit (562 aa).

Helical transmembrane passes span 6–26 (FLLI…LGGF), 62–82 (YALA…VLLM), 132–152 (GLTV…FALI), 175–195 (LYVL…QGVL), 253–273 (FVQM…FGQV), 283–303 (LIWA…YAEL), 327–347 (FGIL…CGAV), 356–376 (ALGG…FGGV), 379–399 (GLYG…LMIG), 416–436 (MTAL…ALAL), 483–503 (LLLA…VLAI), and 526–546 (LFIG…FIPA).

This sequence belongs to the KdpA family. In terms of assembly, the system is composed of three essential subunits: KdpA, KdpB and KdpC.

The protein localises to the cell inner membrane. Part of the high-affinity ATP-driven potassium transport (or Kdp) system, which catalyzes the hydrolysis of ATP coupled with the electrogenic transport of potassium into the cytoplasm. This subunit binds the periplasmic potassium ions and delivers the ions to the membrane domain of KdpB through an intramembrane tunnel. The chain is Potassium-transporting ATPase potassium-binding subunit from Yersinia pseudotuberculosis serotype IB (strain PB1/+).